Here is a 199-residue protein sequence, read N- to C-terminus: Phycocyanobilin lyase CpcT (199 aa).

Belongs to the CpcT/CpeT biliprotein lyase family.

Its function is as follows. Catalyzes the site-selective attachment of phycocyanobilin (PCB) to 'Cys-154' of C-phycocyanin subunit beta (CpcB) and to 'Cys-153' of phycoerythrocyanin subunit beta (PecB). Does not have chromophore lyase activity for ApcA1, ApcA2, ApcB, ApcD, ApcF or PecA. This chain is Phycocyanobilin lyase CpcT (cpcT1), found in Nostoc sp. (strain PCC 7120 / SAG 25.82 / UTEX 2576).